Reading from the N-terminus, the 432-residue chain is Pachytene checkpoint protein 2 homolog (432 aa).

Met-1 carries the post-translational modification N-acetylmethionine. 179–186 (GPPGTGKT) contacts ATP.

Belongs to the AAA ATPase family. PCH2 subfamily. Specifically interacts with the ligand binding domain of the thyroid receptor (TR). This interaction does not require the presence of thyroid hormone for its interaction. Interacts with proteasome subunit PSMA8; to participate in meiosis progression during spermatogenesis.

In terms of biological role, plays a key role in chromosome recombination and chromosome structure development during meiosis. Required at early steps in meiotic recombination that leads to non-crossovers pathways. Also needed for efficient completion of homologous synapsis by influencing crossover distribution along the chromosomes affecting both crossovers and non-crossovers pathways. Also required for development of higher-order chromosome structures and is needed for synaptonemal-complex formation. In males, required for efficient synapsis of the sex chromosomes and for sex body formation. Promotes early steps of the DNA double-strand breaks (DSBs) repair process upstream of the assembly of RAD51 complexes. Required for depletion of HORMAD1 and HORMAD2 from synapsed chromosomes. The chain is Pachytene checkpoint protein 2 homolog (TRIP13) from Canis lupus familiaris (Dog).